A 632-amino-acid polypeptide reads, in one-letter code: Phosphatidylinositol-3,5-bisphosphate 3-phosphatase MTMR8 (632 aa).

The Myotubularin phosphatase domain occupies 126–500 (GWELISVVND…LHFKFWCGMY (375 aa)). Positions 250, 275, and 276 each coordinate a 1,2-diacyl-sn-glycero-3-phospho-(1D-myo-inositol-3,5-bisphosphate). A 1,2-diacyl-sn-glycero-3-phospho-(1D-myo-inositol-3-phosphate) is bound by residues Asn250, Asn275, and Ile276. Catalysis depends on Cys338, which acts as the Phosphocysteine intermediate. 8 residues coordinate a 1,2-diacyl-sn-glycero-3-phospho-(1D-myo-inositol-3,5-bisphosphate): Ser339, Asp340, Gly341, Trp342, Asp343, Arg344, Lys380, and Arg384. 6 residues coordinate a 1,2-diacyl-sn-glycero-3-phospho-(1D-myo-inositol-3-phosphate): Ser339, Asp340, Gly341, Trp342, Asp343, and Arg344. Ser339 and Asp340 together coordinate phosphate. Phosphate-binding residues include Trp342, Asp343, and Arg344. Position 384 (Arg384) interacts with a 1,2-diacyl-sn-glycero-3-phospho-(1D-myo-inositol-3-phosphate). The interval 545-632 (LPDPAGPINT…HSKEEVQESS (88 aa)) is disordered. The span at 602–632 (EPAANEHDLSSKDKPVFVETEHSKEEVQESS) shows a compositional bias: basic and acidic residues.

The protein belongs to the protein-tyrosine phosphatase family. Non-receptor class myotubularin subfamily. As to quaternary structure, homodimer.

Its subcellular location is the nucleus envelope. The enzyme catalyses a 1,2-diacyl-sn-glycero-3-phospho-(1D-myo-inositol-3,5-bisphosphate) + H2O = a 1,2-diacyl-sn-glycero-3-phospho-(1D-myo-inositol-5-phosphate) + phosphate. It catalyses the reaction a 1,2-diacyl-sn-glycero-3-phospho-(1D-myo-inositol-3-phosphate) + H2O = a 1,2-diacyl-sn-glycero-3-phospho-(1D-myo-inositol) + phosphate. It carries out the reaction 1,2-dioctanoyl-sn-glycero-3-phospho-(1D-myo-inositol-3,5-bisphosphate) + H2O = 1,2-dioctanoyl-sn-glycero-3-phospho-(1D-myo-inositol-5-phosphate) + phosphate. In terms of biological role, lipid phosphatase that specifically dephosphorylates the D-3 position of phosphatidylinositol 3-phosphate and phosphatidylinositol 3,5-bisphosphate, generating phosphatidylinositol and phosphatidylinositol 5-phosphate. In Danio rerio (Zebrafish), this protein is Phosphatidylinositol-3,5-bisphosphate 3-phosphatase MTMR8 (mtmr8).